Here is a 330-residue protein sequence, read N- to C-terminus: MANFAAITGWGMAVPERVLTNADLERMVETSDEWIQTRTGIRERRIAGPGEHTSALSIAAGRAALARAGLDAAQIDTVILATCTPDRPFPATACTVQAGVGARRAAAFDIVAACSGFVYGLQVATSMVRSGAARNVLFVACDIFTHFINWNDRNTCVLFGDGAGAVVLQPSDEPAGLLSCVLGADGEQEDLMAVDAGGTRLPATPELLEEGRQYVFMNGREIFKHAVREMAASSFDALQAAGLSTDDVALVIPHQANLRIIEATAKRLEVPLDRVFVNLDRYGNTSAASIPIALVEAVEQQRLRKGDYALLTSFGGGLTWASAVIRWSAG.

Residues C114 and H254 contribute to the active site. The ACP-binding stretch occupies residues 255–259 (QANLR). Residue N284 is part of the active site.

Belongs to the thiolase-like superfamily. FabH family. Homodimer.

It localises to the cytoplasm. It carries out the reaction malonyl-[ACP] + acetyl-CoA + H(+) = 3-oxobutanoyl-[ACP] + CO2 + CoA. The protein operates within lipid metabolism; fatty acid biosynthesis. Functionally, catalyzes the condensation reaction of fatty acid synthesis by the addition to an acyl acceptor of two carbons from malonyl-ACP. Catalyzes the first condensation reaction which initiates fatty acid synthesis and may therefore play a role in governing the total rate of fatty acid production. Possesses both acetoacetyl-ACP synthase and acetyl transacylase activities. Its substrate specificity determines the biosynthesis of branched-chain and/or straight-chain of fatty acids. This is Beta-ketoacyl-[acyl-carrier-protein] synthase III from Roseiflexus castenholzii (strain DSM 13941 / HLO8).